Consider the following 980-residue polypeptide: MKSLKAKFRKSDTNEWNKNDDRLLQAVENGDAEKVASLLGKKGASATKHDSEGKTAFHLAAAKGHVECLRVMITHGVDVTAQDTTGHSALHLAAKNSHHECIRKLLQSKCPAESVDSSGKTALHYAAAQGCLQAVQILCEHKSPINLKDLDGNIPLLLAVQNGHSEICHFLLDHGADVNSRNKSGRTALMLACEIGSSNAVEALIKKGADLNLVDSLGYNALHYSKLSENAGIQSLLLSKISQDADLKTPTKPKQHDQVSKISSERSGTPKKRKAPPPPISPTQLSDVSSPRSITSTPLSGKESVFFAEPPFKAEISSIRENKDRLSDSTTGADSLLDISSEADQQDLLSLLQAKVASLTLHNKELQDKLQAKSPKEAEADLSFDSYHSTQTDLGPSLGKPGETSPPDSKSSPSVLIHSLGKSTTDNDVRIQQLQEILQDLQKRLESSEAERKQLQVELQSRRAELVCLNNTEISENSSDLSQKLKETQSKYEEAMKEVLSVQKQMKLGLVSPESMDNYSHFHELRVTEEEINVLKQDLQNALEESERNKEKVRELEEKLVEREKGTVIKPPVEEYEEMKSSYCSVIENMNKEKAFLFEKYQEAQEEIMKLKDTLKSQMTQEASDEAEDMKEAMNRMIDELNKQVSELSQLYKEAQAELEDYRKRKSLEDVTAEYIHKAEHEKLMQLTNVSRAKAEDALSEMKSQYSKVLNELTQLKQLVDAQKENSVSITEHLQVITTLRTAAKEMEEKISNLKEHLASKEVEVAKLEKQLLEEKAAMTDAMVPRSSYEKLQSSLESEVSVLASKLKESVKEKEKVHSEVVQIRSEVSQVKREKENIQTLLKSKEQEVNELLQKFQQAQEELAEMKRYAESSSKLEEDKDKKINEMSKEVTKLKEALNSLSQLSYSTSSSKRQSQQLEALQQQVKQLQNQLAECKKQHQEVISVYRMHLLYAVQGQMDEDVQKVLKQILTMCKNQSQKK.

Residue Met1 is modified to N-acetylmethionine. Ser11 carries the post-translational modification Phosphoserine. 7 ANK repeats span residues 18 to 51 (KNDDRLLQAVENGDAEKVASLLGKKGASATKHDS), 52 to 81 (EGKTAFHLAAAKGHVECLRVMITHGVDVTA), 85 to 114 (TGHSALHLAAKNSHHECIRKLLQSKCPAES), 118 to 147 (SGKTALHYAAAQGCLQAVQILCEHKSPINL), 151 to 180 (DGNIPLLLAVQNGHSEICHFLLDHGADVNS), 184 to 213 (SGRTALMLACEIGSSNAVEALIKKGADLNL), and 217 to 247 (LGYNALHYSKLSENAGIQSLLLSKISQDADL). The span at 247 to 259 (LKTPTKPKQHDQV) shows a compositional bias: basic and acidic residues. Residues 247 to 301 (LKTPTKPKQHDQVSKISSERSGTPKKRKAPPPPISPTQLSDVSSPRSITSTPLSG) form a disordered region. Thr249 carries the post-translational modification Phosphothreonine. The Nuclear localization signal signature appears at 270–276 (PKKRKAP). Residues Ser281, Ser286, and Ser293 each carry the phosphoserine modification. Residues 282–299 (PTQLSDVSSPRSITSTPL) show a composition bias toward polar residues. Phosphothreonine occurs at positions 295 and 297. 14 positions are modified to phosphoserine: Ser300, Ser304, Ser318, Ser327, Ser329, Ser340, Ser341, Ser350, Ser358, Ser419, Ser512, Ser515, Ser667, and Ser915. A coiled-coil region spans residues 349–374 (LSLLQAKVASLTLHNKELQDKLQAKS). A disordered region spans residues 387–423 (YHSTQTDLGPSLGKPGETSPPDSKSSPSVLIHSLGKS). Residues 425–947 (TDNDVRIQQL…QHQEVISVYR (523 aa)) adopt a coiled-coil conformation.

As to quaternary structure, interacts with PALLD. Associates with actin. However, does not bind F-actin directly. Highly expressed in placenta, muscle, kidney and testis. Moderately expressed in heart, brain, lung, liver and intestine. Isoform 2 is widely expressed and expressed in fetal and adult testes, and spermatozoa.

It localises to the cytoplasm. Its subcellular location is the cytoskeleton. It is found in the stress fiber. The protein resides in the cell cortex. The protein localises to the cell junction. It localises to the nucleus. Its function is as follows. Plays a role in actin regulation at the ectoplasmic specialization, a type of cell junction specific to testis. Important for establishment of sperm polarity and normal spermatid adhesion. May also promote integrity of Sertoli cell tight junctions at the blood-testis barrier. The protein is Ankycorbin (RAI14) of Homo sapiens (Human).